We begin with the raw amino-acid sequence, 208 residues long: Large ribosomal subunit protein uL3 (208 aa).

Q149 is modified (N5-methylglutamine).

This sequence belongs to the universal ribosomal protein uL3 family. As to quaternary structure, part of the 50S ribosomal subunit. Forms a cluster with proteins L14 and L19. In terms of processing, methylated by PrmB.

Functionally, one of the primary rRNA binding proteins, it binds directly near the 3'-end of the 23S rRNA, where it nucleates assembly of the 50S subunit. In Mannheimia succiniciproducens (strain KCTC 0769BP / MBEL55E), this protein is Large ribosomal subunit protein uL3.